The sequence spans 291 residues: Serine/threonine-protein phosphatase Pgam5, mitochondrial (291 aa).

Residues 7 to 23 (FACGTGAGLAAFYLQRL) form a helical membrane-spanning segment. Positions 59–78 (KSLVRPQKNEQPQEQNRYNS) are disordered. A compositionally biased stretch (polar residues) spans 67–77 (NEQPQEQNRYN).

Belongs to the phosphoglycerate mutase family. BPG-dependent PGAM subfamily. In terms of assembly, interacts with Pk92B/ASK1.

It localises to the mitochondrion outer membrane. The catalysed reaction is O-phospho-L-seryl-[protein] + H2O = L-seryl-[protein] + phosphate. It carries out the reaction O-phospho-L-threonyl-[protein] + H2O = L-threonyl-[protein] + phosphate. Functionally, displays phosphatase activity for serine/threonine residues, and dephosphorylates and activates Pk92B kinase. Has apparently no phosphoglycerate mutase activity. This Drosophila willistoni (Fruit fly) protein is Serine/threonine-protein phosphatase Pgam5, mitochondrial.